We begin with the raw amino-acid sequence, 601 residues long: Transcription factor Ken (601 aa).

Residues 33–101 (ADLTIVCENK…LYSGQTCITS (69 aa)) form the BTB domain. Disordered stretches follow at residues 188–276 (AAEC…TINP), 331–365 (LSDG…DNQP), and 471–491 (DHPE…AGSN). Composition is skewed to basic and acidic residues over residues 190 to 200 (ECERSGGHNNK) and 207 to 216 (CTHKDNKSDK). A compositionally biased stretch (polar residues) spans 223 to 234 (NLSNAPPSGTSG). Residues 235–247 (SNSNISTSSNHQQ) show a composition bias toward low complexity. The segment covering 248 to 258 (QQHHHHHHHNH) has biased composition (basic residues). Residues 259-275 (NNNNNNNNNNSSSSTIN) show a composition bias toward low complexity. Over residues 476–490 (RSGSASGSGANLAGS) the composition is skewed to low complexity. C2H2-type zinc fingers lie at residues 500–522 (YRCE…LRVH), 528–551 (FACR…CSVH), and 567–590 (YSCC…SGHH).

As to expression, expressed from stage 5 in two rather faint stripes at positions of 64% (anterior domain; AD) and 17% (posterior domain; PD) egg length. During early gastrulation, at stage 6, these two stripes become more evident and detectable at the region posterior to the cephalic furrow and in the hindgut primordium. The AD disappears as gastrulation proceeds, while the PD remains. At stage 15, the AD appears again in the foregut, and PD expression in the hindgut and anal pad. In imaginal disks, it is ubiquitously expressed in both males and females in genital and eye-antennal disks. Not expressed in the brain. In genital disks, it is expressed along the margin of the anterior bulbus in males, while in females it is expressed in the posterior compartment along the anterior-posterior border, with medial expansion in the most posterior region.

Its subcellular location is the nucleus. In terms of biological role, transcription factor required for terminalia development. Negative regulator of the JAK/STAT pathway: represses JAK/STAT-dependent expression of ventral veins lacking (vvl) in the posterior spiracles. The sequence is that of Transcription factor Ken (ken) from Drosophila melanogaster (Fruit fly).